The primary structure comprises 395 residues: Acetate kinase (395 aa).

A Mg(2+)-binding site is contributed by Asn-8. An ATP-binding site is contributed by Lys-15. Arg-89 is a substrate binding site. Residue Asp-146 is the Proton donor/acceptor of the active site. ATP is bound by residues 206 to 210 (HLGNG), 281 to 283 (DLR), and 329 to 333 (GIGEN). Glu-382 lines the Mg(2+) pocket.

It belongs to the acetokinase family. As to quaternary structure, homodimer. Requires Mg(2+) as cofactor. Mn(2+) is required as a cofactor.

Its subcellular location is the cytoplasm. The catalysed reaction is acetate + ATP = acetyl phosphate + ADP. Its pathway is metabolic intermediate biosynthesis; acetyl-CoA biosynthesis; acetyl-CoA from acetate: step 1/2. Its function is as follows. Catalyzes the formation of acetyl phosphate from acetate and ATP. Can also catalyze the reverse reaction. The polypeptide is Acetate kinase (Bacillus velezensis (strain DSM 23117 / BGSC 10A6 / LMG 26770 / FZB42) (Bacillus amyloliquefaciens subsp. plantarum)).